We begin with the raw amino-acid sequence, 362 residues long: Probable peptidyl-prolyl cis-trans isomerase C27F1.06c (362 aa).

The residue at position 69 (serine 69) is a Phosphoserine. Residues 144 to 274 are disordered; it reads DEFSSDEEEM…KVKGDGPAAK (131 aa). Acidic residues-rich tracts occupy residues 146–167 and 175–189; these read FSSDEEEMDDISVTSSEEEEEE and LNSDEEDAEQAEEEI. Position 177 is a phosphoserine (serine 177). Residues 190 to 218 are compositionally biased toward basic and acidic residues; that stretch reads LEKPVPKDEVAEKHSKDKLKKEEKEKKTA. Positions 276-362 constitute a PPIase FKBP-type domain; that stretch reads KKRVSMRYIG…VFDVKLLAVN (87 aa).

It belongs to the FKBP-type PPIase family. FKBP3/4 subfamily.

It catalyses the reaction [protein]-peptidylproline (omega=180) = [protein]-peptidylproline (omega=0). In terms of biological role, PPIases accelerate the folding of proteins. It catalyzes the cis-trans isomerization of proline imidic peptide bonds in oligopeptides. The polypeptide is Probable peptidyl-prolyl cis-trans isomerase C27F1.06c (Schizosaccharomyces pombe (strain 972 / ATCC 24843) (Fission yeast)).